Consider the following 325-residue polypeptide: NADH-cytochrome b5 reductase 2 (325 aa).

A helical transmembrane segment spans residues 32-48 (VPLYGGLALAAGGAYYY). The FAD-binding FR-type domain maps to 74 to 179 (QGWVDLKLAG…KGPIPKYPWE (106 aa)). 182-217 (KHDHICMIAGGTGITPMYQIIRKIFNNPNDKTKVTL) lines the FAD pocket.

This sequence belongs to the flavoprotein pyridine nucleotide cytochrome reductase family. It depends on FAD as a cofactor.

The protein localises to the mitochondrion outer membrane. The enzyme catalyses 2 Fe(III)-[cytochrome b5] + NADH = 2 Fe(II)-[cytochrome b5] + NAD(+) + H(+). Functionally, may mediate the reduction of outer membrane cytochrome b5. The chain is NADH-cytochrome b5 reductase 2 (MCR1) from Coccidioides immitis (strain RS) (Valley fever fungus).